The chain runs to 83 residues: Cell division topological specificity factor (83 aa).

This sequence belongs to the MinE family.

Prevents the cell division inhibition by proteins MinC and MinD at internal division sites while permitting inhibition at polar sites. This ensures cell division at the proper site by restricting the formation of a division septum at the midpoint of the long axis of the cell. This chain is Cell division topological specificity factor, found in Buchnera aphidicola subsp. Acyrthosiphon pisum (strain 5A).